A 240-amino-acid chain; its full sequence is MKRRAVVLFSGGLDSTACLYWAKKQYDEVIMLTVNYGSNEERVTNKVAEYFSKELDVRLKIVKLDFLKEFSEIRGSSLVGGEVPRVTAEELEDIEKASETARSVWIPARNLVLISVAASLLDALGGGDIIVGFNAEEATTFPDNSREFVEKLNEALRFATLNPVKVVAPLIDLDKRGIAKLLKELNAKYEYSNSCYNPKGFTEDGRPIHCGECESCVRRHKGLIEGIGEDKTVYAITPRI.

Phe-9–Leu-19 contacts ATP. Residues Cys-195, Cys-210, Cys-213, and Cys-216 each coordinate Zn(2+).

It belongs to the QueC family. It depends on Zn(2+) as a cofactor.

The enzyme catalyses 7-carboxy-7-deazaguanine + NH4(+) + ATP = 7-cyano-7-deazaguanine + ADP + phosphate + H2O + H(+). It participates in purine metabolism; 7-cyano-7-deazaguanine biosynthesis. Catalyzes the ATP-dependent conversion of 7-carboxy-7-deazaguanine (CDG) to 7-cyano-7-deazaguanine (preQ(0)). In Pyrococcus furiosus (strain ATCC 43587 / DSM 3638 / JCM 8422 / Vc1), this protein is 7-cyano-7-deazaguanine synthase.